Here is a 230-residue protein sequence, read N- to C-terminus: MSKNIVVAPSILSADFSRLGEEIKAVDEAGADWIHVDVMDGRFVPNITIGPLIVDAIRPLTKKTLDVHLMIVEPEKYVEDFAKAGADIISVHVEHNASPHLHRTLCQIRELGKKAGAVLNPSTPLDFLEYVLPVCDLILIMSVNPGFGGQSFIPEVLPKIRALRQMCDERGLDPWIEVDGGLKPNNTWQVLEAGANAIVAGSAVFNAPNYAEAIAGVRNSKRPEPQLATV.

Ser-10 serves as a coordination point for substrate. Positions 35, 37, and 68 each coordinate a divalent metal cation. Asp-37 (proton acceptor) is an active-site residue. Substrate-binding positions include His-68, 146–149, 179–181, and 201–202; these read GFGG, DGG, and GS. A divalent metal cation is bound at residue Asp-179. Catalysis depends on Asp-179, which acts as the Proton donor.

The protein belongs to the ribulose-phosphate 3-epimerase family. As to quaternary structure, homohexamer. Requires a divalent metal cation as cofactor.

The catalysed reaction is D-ribulose 5-phosphate = D-xylulose 5-phosphate. Its pathway is carbohydrate degradation. Catalyzes the reversible epimerization of D-ribulose 5-phosphate to D-xylulose 5-phosphate. This is Ribulose-phosphate 3-epimerase from Synechocystis sp. (strain ATCC 27184 / PCC 6803 / Kazusa).